The primary structure comprises 159 residues: Ribosomal RNA large subunit methyltransferase H (159 aa).

S-adenosyl-L-methionine-binding positions include Leu76, Gly108, and 127–132; that span reads FSKMTF.

This sequence belongs to the RNA methyltransferase RlmH family. As to quaternary structure, homodimer.

It localises to the cytoplasm. It carries out the reaction pseudouridine(1915) in 23S rRNA + S-adenosyl-L-methionine = N(3)-methylpseudouridine(1915) in 23S rRNA + S-adenosyl-L-homocysteine + H(+). In terms of biological role, specifically methylates the pseudouridine at position 1915 (m3Psi1915) in 23S rRNA. The chain is Ribosomal RNA large subunit methyltransferase H from Exiguobacterium sp. (strain ATCC BAA-1283 / AT1b).